The primary structure comprises 403 residues: Creatinase (403 aa).

Residue His232 is part of the active site.

This sequence belongs to the peptidase M24 family. Creatinase subfamily. As to quaternary structure, homodimer.

It carries out the reaction creatine + H2O = sarcosine + urea. This is Creatinase from Pseudomonas putida (Arthrobacter siderocapsulatus).